We begin with the raw amino-acid sequence, 114 residues long: MASEEGQVIACHTVETWNEQLQKANESKTLVVVDFTASWCGPCRFIAPFFADLAKKLPNVLFLKVDTDELKSVASDWAIQAMPTFMFLKEGKILDKVVGAKKDELQSTIAKHLA.

Residue alanine 2 is modified to N-acetylalanine. Positions 2–114 constitute a Thioredoxin domain; sequence ASEEGQVIAC…LQSTIAKHLA (113 aa). Catalysis depends on nucleophile residues cysteine 40 and cysteine 43. Cysteine 40 and cysteine 43 form a disulfide bridge.

Belongs to the thioredoxin family. Plant H-type subfamily. Interacts with FBA6. Interacts with MDH1.

It localises to the cytoplasm. In terms of biological role, thiol-disulfide oxidoreductase involved in the redox regulation of a number of cytosolic enzymes. Activates the cytosolic malate dehydrogenase (MDH) probably by reducing an interchain disulfide bond of the inactive MDH homodimer. Possesses insulin disulfide bonds reducing activity. The sequence is that of Thioredoxin H1 (TRX1) from Arabidopsis thaliana (Mouse-ear cress).